The chain runs to 84 residues: Control protein C.SmaI (84 aa).

One can recognise an HTH cro/C1-type domain in the interval 19 to 73 (VRSYRNINNLSQEQLAEISGLHRTYIGSVERKERNVTLSTLIILAKALNTSVPKL). Residues 30 to 49 (QEQLAEISGLHRTYIGSVER) constitute a DNA-binding region (H-T-H motif).

Functionally, may control expression of its associated restriction-modification system SmaI. The protein is Control protein C.SmaI of Serratia marcescens.